An 860-amino-acid chain; its full sequence is Ribosome-releasing factor 2, mitochondrial (860 aa).

The tr-type G domain occupies 45–337 (DRTRNIGIIA…AVVNFLPSPL (293 aa)). GTP is bound by residues 54–61 (AHIDAGKT), 118–122 (DTPGH), and 172–175 (NKMD).

This sequence belongs to the TRAFAC class translation factor GTPase superfamily. Classic translation factor GTPase family. EF-G/EF-2 subfamily.

The protein localises to the mitochondrion. Mitochondrial GTPase that mediates the disassembly of ribosomes from messenger RNA at the termination of mitochondrial protein biosynthesis. Not involved in the GTP-dependent ribosomal translocation step during translation elongation. The protein is Ribosome-releasing factor 2, mitochondrial of Debaryomyces hansenii (strain ATCC 36239 / CBS 767 / BCRC 21394 / JCM 1990 / NBRC 0083 / IGC 2968) (Yeast).